We begin with the raw amino-acid sequence, 363 residues long: Protein Wnt-5b (363 aa).

Positions 1–21 are cleaved as a signal peptide; that stretch reads MDVRMNQGHLLLAVTLIVCNS. C87 and C98 form a disulfide bridge. N-linked (GlcNAc...) asparagine glycosylation is found at N97 and N103. Cystine bridges form between C137–C145, C147–C165, C221–C235, C223–C230, C292–C323, C308–C318, C322–C362, C338–C353, C340–C350, and C345–C346. S227 is lipidated: O-palmitoleoyl serine; by PORCN. Residues N295 and N309 are each glycosylated (N-linked (GlcNAc...) asparagine).

This sequence belongs to the Wnt family. In terms of processing, palmitoleoylation is required for efficient binding to frizzled receptors. Depalmitoleoylation leads to Wnt signaling pathway inhibition.

The protein resides in the secreted. Its subcellular location is the extracellular space. The protein localises to the extracellular matrix. Its function is as follows. Ligand for members of the frizzled family of seven transmembrane receptors. Can activate or inhibit canonical Wnt signaling, depending on receptor context. Required during embryogenesis for extension of the primary anterior-posterior axis. Regulates convergent extension movements and hypaxial myogenesis during gastrulation via activation of non-canonical Wnt signaling. The sequence is that of Protein Wnt-5b (wnt5b) from Danio rerio (Zebrafish).